Consider the following 475-residue polypeptide: UDP-N-acetylmuramate--L-alanine ligase (475 aa).

Gly114–Thr120 is a binding site for ATP.

This sequence belongs to the MurCDEF family.

It is found in the cytoplasm. It carries out the reaction UDP-N-acetyl-alpha-D-muramate + L-alanine + ATP = UDP-N-acetyl-alpha-D-muramoyl-L-alanine + ADP + phosphate + H(+). It functions in the pathway cell wall biogenesis; peptidoglycan biosynthesis. Functionally, cell wall formation. The sequence is that of UDP-N-acetylmuramate--L-alanine ligase from Bartonella bacilliformis (strain ATCC 35685 / KC583 / Herrer 020/F12,63).